The sequence spans 96 residues: Myticin-A (96 aa).

The N-terminal stretch at 1 to 20 (MKATILLAVLVAVFVAGTEA) is a signal peptide. A propeptide spans 61 to 96 (VNNPFRVNQVAKSINDLDYTPIMKSMENLDNGMDML) (removed in mature form).

In terms of processing, contains four disulfide bonds. As to expression, hemocytes.

Its subcellular location is the secreted. Functionally, bacteriolytic activity against Gram-positive bacteria M.luteus, B.megaterium and A.viridans. The chain is Myticin-A from Mytilus galloprovincialis (Mediterranean mussel).